A 199-amino-acid polypeptide reads, in one-letter code: dTTP/UTP pyrophosphatase (199 aa).

The active-site Proton acceptor is the D75.

This sequence belongs to the Maf family. YhdE subfamily. Requires a divalent metal cation as cofactor.

It is found in the cytoplasm. The enzyme catalyses dTTP + H2O = dTMP + diphosphate + H(+). The catalysed reaction is UTP + H2O = UMP + diphosphate + H(+). Its function is as follows. Nucleoside triphosphate pyrophosphatase that hydrolyzes dTTP and UTP. May have a dual role in cell division arrest and in preventing the incorporation of modified nucleotides into cellular nucleic acids. The polypeptide is dTTP/UTP pyrophosphatase (Methylobacillus flagellatus (strain ATCC 51484 / DSM 6875 / VKM B-1610 / KT)).